We begin with the raw amino-acid sequence, 160 residues long: SsrA-binding protein (160 aa).

Belongs to the SmpB family.

The protein localises to the cytoplasm. In terms of biological role, required for rescue of stalled ribosomes mediated by trans-translation. Binds to transfer-messenger RNA (tmRNA), required for stable association of tmRNA with ribosomes. tmRNA and SmpB together mimic tRNA shape, replacing the anticodon stem-loop with SmpB. tmRNA is encoded by the ssrA gene; the 2 termini fold to resemble tRNA(Ala) and it encodes a 'tag peptide', a short internal open reading frame. During trans-translation Ala-aminoacylated tmRNA acts like a tRNA, entering the A-site of stalled ribosomes, displacing the stalled mRNA. The ribosome then switches to translate the ORF on the tmRNA; the nascent peptide is terminated with the 'tag peptide' encoded by the tmRNA and targeted for degradation. The ribosome is freed to recommence translation, which seems to be the essential function of trans-translation. This chain is SsrA-binding protein, found in Proteus mirabilis (strain HI4320).